Consider the following 272-residue polypeptide: Ribosomal RNA small subunit methyltransferase A (272 aa).

S-adenosyl-L-methionine is bound by residues asparagine 18, leucine 20, glycine 45, glutamate 66, aspartate 91, and asparagine 113.

The protein belongs to the class I-like SAM-binding methyltransferase superfamily. rRNA adenine N(6)-methyltransferase family. RsmA subfamily.

The protein localises to the cytoplasm. It catalyses the reaction adenosine(1518)/adenosine(1519) in 16S rRNA + 4 S-adenosyl-L-methionine = N(6)-dimethyladenosine(1518)/N(6)-dimethyladenosine(1519) in 16S rRNA + 4 S-adenosyl-L-homocysteine + 4 H(+). Specifically dimethylates two adjacent adenosines (A1518 and A1519) in the loop of a conserved hairpin near the 3'-end of 16S rRNA in the 30S particle. May play a critical role in biogenesis of 30S subunits. This is Ribosomal RNA small subunit methyltransferase A from Yersinia pseudotuberculosis serotype O:1b (strain IP 31758).